The sequence spans 941 residues: UvrABC system protein A (941 aa).

37-44 (GLSGSGKS) lines the ATP pocket. A C4-type zinc finger spans residues 260–287 (CFKCKMSFEELEPLSFSFNSPKGACESC). 2 ABC transporter domains span residues 316–585 (IFGY…NNHS) and 605–937 (KEKH…KFLA). 637–644 (GVSGSGKS) is an ATP binding site. The segment at 737–763 (CEKCQGDGDIKIEMHFLPDVLVQCDSC) adopts a C4-type zinc-finger fold.

The protein belongs to the ABC transporter superfamily. UvrA family. Forms a heterotetramer with UvrB during the search for lesions.

Its subcellular location is the cytoplasm. The UvrABC repair system catalyzes the recognition and processing of DNA lesions. UvrA is an ATPase and a DNA-binding protein. A damage recognition complex composed of 2 UvrA and 2 UvrB subunits scans DNA for abnormalities. When the presence of a lesion has been verified by UvrB, the UvrA molecules dissociate. This is UvrABC system protein A from Helicobacter pylori (strain J99 / ATCC 700824) (Campylobacter pylori J99).